Here is a 425-residue protein sequence, read N- to C-terminus: Cyanogenic beta-glucosidase (425 aa).

Positions 1-11 (LLSITTTHIHA) are cleaved as a signal peptide. Residues Q44, H148, and 193–194 (NE) each bind a beta-D-glucoside. Residue E194 is the Proton donor of the active site. C213 and C221 are oxidised to a cystine. A glycan (N-linked (GlcNAc...) asparagine) is linked at N220. Y337 and E408 together coordinate a beta-D-glucoside. E408 functions as the Nucleophile in the catalytic mechanism. N412 carries N-linked (GlcNAc...) asparagine glycosylation.

The protein belongs to the glycosyl hydrolase 1 family. Homodimer. Leaves.

The enzyme catalyses Hydrolysis of terminal, non-reducing beta-D-glucosyl residues with release of beta-D-glucose.. In terms of biological role, hydrolyzes cyanoglucosides, contributing to the release of hydrocyanic acid, which functions as a defense mechanism against small predators, when the leaf tissue is damaged. This is Cyanogenic beta-glucosidase (LI) from Trifolium repens (Creeping white clover).